The sequence spans 436 residues: MQPVVETLSGLERRVDLAVSVADVEKEVQAQLKRVARTAKVPGFRPGKAPLAMLERSHGPGIRYDVINGQVGRAFEQAVDGAKLRVAGSPTLEPKTEGVADDTLAFTATFEVYPEVAVPDLSALSVTRYETAVTDAEVQQTLDVLRKQRANFEAREGRAAQDGDRVTLDFAGTIDGVPFEGGKAESFPFVLGQGRMLPEFEAAAKGLKAGETKVFPLKFPDDYQGKEVAGKTAEFTITVKEVAEGVLPEVNAEFAKSLGQAEGDVEKLKADIRTNIEREAKARTQGRTKASVMDALVEAGKFDVPKALVDSDVQSRVQAAREELKQRGVPNAESVPIPAEAFATESERRVRLGLLVSELVKQAQLQAKPEQVRARIEEFAQNYEQPAQVVSYYLADRQRRAEIEAIVLEDNVVQHVLDKAKVTEEKVPFDQLMGMA.

One can recognise a PPIase FKBP-type domain in the interval 163–248; that stretch reads GDRVTLDFAG…VKEVAEGVLP (86 aa).

Belongs to the FKBP-type PPIase family. Tig subfamily.

The protein localises to the cytoplasm. The catalysed reaction is [protein]-peptidylproline (omega=180) = [protein]-peptidylproline (omega=0). Involved in protein export. Acts as a chaperone by maintaining the newly synthesized protein in an open conformation. Functions as a peptidyl-prolyl cis-trans isomerase. The sequence is that of Trigger factor from Bordetella petrii (strain ATCC BAA-461 / DSM 12804 / CCUG 43448).